Here is an 838-residue protein sequence, read N- to C-terminus: Probable beta-glucosidase K (838 aa).

Residue N19 is glycosylated (N-linked (GlcNAc...) asparagine). D232 is an active-site residue. Residues N324 and N489 are each glycosylated (N-linked (GlcNAc...) asparagine). One can recognise a PA14 domain in the interval 405–564 (EGQPGLRMRF…DPELAIARAV (160 aa)).

This sequence belongs to the glycosyl hydrolase 3 family.

The protein localises to the secreted. The catalysed reaction is Hydrolysis of terminal, non-reducing beta-D-glucosyl residues with release of beta-D-glucose.. Its pathway is glycan metabolism; cellulose degradation. Its function is as follows. Beta-glucosidases are one of a number of cellulolytic enzymes involved in the degradation of cellulosic biomass. Catalyzes the last step releasing glucose from the inhibitory cellobiose. In Emericella nidulans (strain FGSC A4 / ATCC 38163 / CBS 112.46 / NRRL 194 / M139) (Aspergillus nidulans), this protein is Probable beta-glucosidase K (bglK).